Consider the following 338-residue polypeptide: Anthranilate phosphoribosyltransferase (338 aa).

5-phospho-alpha-D-ribose 1-diphosphate is bound by residues G83, 86-87 (GD), S91, 93-96 (NCST), 111-119 (KHGNRAVSS), and A123. Anthranilate is bound at residue G83. S95 lines the Mg(2+) pocket. N114 serves as a coordination point for anthranilate. R169 lines the anthranilate pocket. Mg(2+) is bound by residues D228 and E229.

It belongs to the anthranilate phosphoribosyltransferase family. In terms of assembly, homodimer. It depends on Mg(2+) as a cofactor.

The catalysed reaction is N-(5-phospho-beta-D-ribosyl)anthranilate + diphosphate = 5-phospho-alpha-D-ribose 1-diphosphate + anthranilate. It participates in amino-acid biosynthesis; L-tryptophan biosynthesis; L-tryptophan from chorismate: step 2/5. Its function is as follows. Catalyzes the transfer of the phosphoribosyl group of 5-phosphorylribose-1-pyrophosphate (PRPP) to anthranilate to yield N-(5'-phosphoribosyl)-anthranilate (PRA). The sequence is that of Anthranilate phosphoribosyltransferase from Nitratidesulfovibrio vulgaris (strain DSM 19637 / Miyazaki F) (Desulfovibrio vulgaris).